The sequence spans 339 residues: UDP-3-O-acylglucosamine N-acyltransferase (339 aa).

The Proton acceptor role is filled by His-239.

It belongs to the transferase hexapeptide repeat family. LpxD subfamily. Homotrimer.

The enzyme catalyses a UDP-3-O-[(3R)-3-hydroxyacyl]-alpha-D-glucosamine + a (3R)-hydroxyacyl-[ACP] = a UDP-2-N,3-O-bis[(3R)-3-hydroxyacyl]-alpha-D-glucosamine + holo-[ACP] + H(+). Its pathway is bacterial outer membrane biogenesis; LPS lipid A biosynthesis. Catalyzes the N-acylation of UDP-3-O-acylglucosamine using 3-hydroxyacyl-ACP as the acyl donor. Is involved in the biosynthesis of lipid A, a phosphorylated glycolipid that anchors the lipopolysaccharide to the outer membrane of the cell. This Aliivibrio fischeri (strain ATCC 700601 / ES114) (Vibrio fischeri) protein is UDP-3-O-acylglucosamine N-acyltransferase.